The chain runs to 610 residues: MENLISLVNKIQRACTALGDHGDSSALPTLWDSLPAIAVVGGQSSGKSSVLESIVGKDFLPRGSGIVTRRPLVLQLQKIDDGTREYAEFLHLPRKKFTDFAAVRKEIQDETDRETGRSKAISSVPIHLSIYSPNVVNLTLIDLPGLTKVAVDGQSDSIVKDIENMVRSYIEKPNCIILAISPANQDLATSDAIKISREVDPSGDRTFGVLTKIDLMDKGTDAVEILEGRSFKLKYPWVGVVNRSQADINKNVDMIAARKREREYFSNTTEYRHLANKMGSEHLAKMLSKHLERVIKSRIPGIQSLINKTVLELETELSRLGKPIAADAGGKLYSIMEICRLFDQIFKEHLDGVRAGGEKVYNVFDNQLPAALKRLQFDKQLAMDNIRKLVTEADGYQPHLIAPEQGYRRLIESSIVSIRGPAEASVDTVHAILKDLVHKSVNETVELKQYPALRVEVTNAAIESLDKMREGSKKATLQLVDMECSYLTVDFFRKLPQDVEKGGNPTHSIFDRYNDSYLRRIGSNVLSYVNMVCAGLRNSIPKSIVYCQVREAKRSLLDHFFAELGTMDMKRLSSLLNEDPAIMERRSAISKRLELYRAAQSEIDAVAWSK.

M1 carries the post-translational modification N-acetylmethionine. In terms of domain architecture, Dynamin-type G spans 31-300; it reads WDSLPAIAVV…LERVIKSRIP (270 aa). A G1 motif region spans residues 41–48; it reads GGQSSGKS. 44-49 is a binding site for GTP; the sequence is SSGKSS. A G2 motif region spans residues 67-69; that stretch reads VTR. Residues 142–145 are G3 motif; it reads DLPG. The G4 motif stretch occupies residues 211–214; that stretch reads TKID. GTP-binding positions include 212-217 and 242-245; these read KIDLMD and NRSQ. The interval 241–244 is G5 motif; that stretch reads VNRS. Residues 518-610 form the GED domain; that stretch reads LRRIGSNVLS…SEIDAVAWSK (93 aa).

Belongs to the TRAFAC class dynamin-like GTPase superfamily. Dynamin/Fzo/YdjA family. As to quaternary structure, forms homodimer and may homooligomerize and heterooligomerize to form the phragmoplastin complex. Interacts with AGD3/VAN3. May interact with CALS1. Binds to AHK2. Binds to SH3P2. Forms a complex made of SH3P2 and DRP1A and triggers its accumulation at the cell plate. Interacts with DRP2B at the plasma membrane and in forming clathrin-coated vesicles (CCV). Binds to PHIP1. In terms of tissue distribution, ubiquitous. Expressed in leaves (at protein level).

Its subcellular location is the cytoplasm. It localises to the cytoskeleton. The protein resides in the phragmoplast. It is found in the cell cortex. The protein localises to the cytoplasmic vesicle. Its subcellular location is the clathrin-coated vesicle. It localises to the cell membrane. It carries out the reaction GTP + H2O = GDP + phosphate + H(+). Microtubule-associated force-producing protein that is targeted to at the leading edges of the forming cell plate during cytokinesis. Also plays a major role in plasma membrane maintenance and cell wall integrity with implications in vesicular trafficking, polar cell expansion, vascular formation, and other aspects of plant growth and development, including stigmatic papillae expansion. Collaboratively with DRP2B, participates in clathrin-coated vesicle formation during endocytosis. Necessary for BOR1 polar localization in low-boron (B) conditions as well as for BOR1 endocytosis and subsequent degradation under high-concentration of boron. Has a GTPase activity. Required for the sterols-dependent dynamic high lipid order observed at the cell plate of dividing cells. Together with SH3P2, converts the fused vesicles to tubular structures at the cell plate and phragmoplasts during cytokinesis. With DRP2B and PIP5K3, required for the precise coordination of polar ARAC3/ROP6 and ARAC4/ROP2 placement and subsequent root hair positioning during planar polarity formation in root hair-forming cells, probably by mediating the correct basal-to-planar polarity switching of D6PK into the polar, lipid-enriched domain. Involved in endocytosis required for cellulose deposition during cell wall formation and elongation. Interacts with plasma membrane-mimetic liposomes and induces their clustering. The chain is Phragmoplastin DRP1A from Arabidopsis thaliana (Mouse-ear cress).